Here is a 382-residue protein sequence, read N- to C-terminus: uncharacterized protein (382 aa).

12 helical membrane-spanning segments follow: residues 14 to 34 (GLLL…LWLA), 45 to 65 (VVSS…GYVI), 79 to 99 (FIFA…SWLA), 102 to 122 (FVAG…LMCS), 131 to 151 (LLAA…LLVS), 157 to 177 (LMSV…PLLF), 204 to 224 (LGVN…GLMP), 235 to 255 (ASIG…QWPI), 270 to 290 (VQVF…AMAP), 291 to 311 (ALFI…AWAC), 325 to 345 (ALLL…AMLM), and 348 to 368 (FSDN…LLML).

The protein belongs to the major facilitator superfamily. YcaD (TC 2.A.1.26) family.

It is found in the cell inner membrane. This is an uncharacterized protein from Shigella sonnei (strain Ss046).